The chain runs to 358 residues: Peptide chain release factor 1 (358 aa).

At Q233 the chain carries N5-methylglutamine. The disordered stretch occupies residues 286 to 309; the sequence is AELASARKSQVGTGDRSERIRTYN.

The protein belongs to the prokaryotic/mitochondrial release factor family. In terms of processing, methylated by PrmC. Methylation increases the termination efficiency of RF1.

It is found in the cytoplasm. Functionally, peptide chain release factor 1 directs the termination of translation in response to the peptide chain termination codons UAG and UAA. This chain is Peptide chain release factor 1, found in Carboxydothermus hydrogenoformans (strain ATCC BAA-161 / DSM 6008 / Z-2901).